Reading from the N-terminus, the 232-residue chain is Multiple organellar RNA editing factor 6, mitochondrial (232 aa).

The N-terminal 67 residues, 1-67 (MAKTLSRSTA…TIRTRMDRSG (67 aa)), are a transit peptide targeting the mitochondrion. The tract at residues 208-232 (TNQRGSDKPKYHDRIRNVRRRENMR) is disordered. Basic and acidic residues predominate over residues 212-232 (GSDKPKYHDRIRNVRRRENMR).

Belongs to the MORF family. In terms of assembly, heterodimers with MORF8/RIP1, MORF3/RIP3, MORF6/RIP6, MORF7/RIP7 and MORF9/RIP9.

Its subcellular location is the mitochondrion. Involved in organellar RNA editing. Required for the processing of few RNA editing sites in mitochondria. This is Multiple organellar RNA editing factor 6, mitochondrial from Arabidopsis thaliana (Mouse-ear cress).